The chain runs to 430 residues: Serine--tRNA ligase (430 aa).

Residue 236 to 238 (TAE) coordinates L-serine. 267 to 269 (RSE) provides a ligand contact to ATP. L-serine is bound at residue glutamate 290. Position 354 to 357 (354 to 357 (EISS)) interacts with ATP. An L-serine-binding site is contributed by serine 390.

It belongs to the class-II aminoacyl-tRNA synthetase family. Type-1 seryl-tRNA synthetase subfamily. In terms of assembly, homodimer. The tRNA molecule binds across the dimer.

The protein resides in the cytoplasm. The catalysed reaction is tRNA(Ser) + L-serine + ATP = L-seryl-tRNA(Ser) + AMP + diphosphate + H(+). It carries out the reaction tRNA(Sec) + L-serine + ATP = L-seryl-tRNA(Sec) + AMP + diphosphate + H(+). It participates in aminoacyl-tRNA biosynthesis; selenocysteinyl-tRNA(Sec) biosynthesis; L-seryl-tRNA(Sec) from L-serine and tRNA(Sec): step 1/1. Catalyzes the attachment of serine to tRNA(Ser). Is also able to aminoacylate tRNA(Sec) with serine, to form the misacylated tRNA L-seryl-tRNA(Sec), which will be further converted into selenocysteinyl-tRNA(Sec). This Mannheimia succiniciproducens (strain KCTC 0769BP / MBEL55E) protein is Serine--tRNA ligase.